The following is a 329-amino-acid chain: DNA-directed RNA polymerase subunit alpha (329 aa).

The alpha N-terminal domain (alpha-NTD) stretch occupies residues 1–231 (MQNSLLKPKA…EQLAVFAQLE (231 aa)). The alpha C-terminal domain (alpha-CTD) stretch occupies residues 249–329 (FDPILLRPVD…SWPPAALEKR (81 aa)).

This sequence belongs to the RNA polymerase alpha chain family. As to quaternary structure, homodimer. The RNAP catalytic core consists of 2 alpha, 1 beta, 1 beta' and 1 omega subunit. When a sigma factor is associated with the core the holoenzyme is formed, which can initiate transcription.

It carries out the reaction RNA(n) + a ribonucleoside 5'-triphosphate = RNA(n+1) + diphosphate. In terms of biological role, DNA-dependent RNA polymerase catalyzes the transcription of DNA into RNA using the four ribonucleoside triphosphates as substrates. The sequence is that of DNA-directed RNA polymerase subunit alpha from Albidiferax ferrireducens (strain ATCC BAA-621 / DSM 15236 / T118) (Rhodoferax ferrireducens).